A 729-amino-acid polypeptide reads, in one-letter code: Catalase-peroxidase (729 aa).

The disordered stretch occupies residues 1–26; it reads MTMDQKTDNAGKCPVAHTAPRGRSNR. The tryptophyl-tyrosyl-methioninium (Trp-Tyr) (with M-245) cross-link spans 97–219; that stretch reads WHSAGTYRIT…LAAVQMGLIY (123 aa). H98 acts as the Proton acceptor in catalysis. Positions 219–245 form a cross-link, tryptophyl-tyrosyl-methioninium (Tyr-Met) (with W-97); that stretch reads YVNPEGPNGNPDPVAAAHDIRETFARM. H260 lines the heme b pocket.

This sequence belongs to the peroxidase family. Peroxidase/catalase subfamily. As to quaternary structure, homodimer or homotetramer. Requires heme b as cofactor. Formation of the three residue Trp-Tyr-Met cross-link is important for the catalase, but not the peroxidase activity of the enzyme.

It carries out the reaction H2O2 + AH2 = A + 2 H2O. The enzyme catalyses 2 H2O2 = O2 + 2 H2O. Bifunctional enzyme with both catalase and broad-spectrum peroxidase activity. The chain is Catalase-peroxidase from Sinorhizobium medicae (strain WSM419) (Ensifer medicae).